Consider the following 340-residue polypeptide: UPF0324 membrane protein OB3406 (340 aa).

Helical transmembrane passes span 12–31, 36–58, 94–116, 126–148, 155–177, 215–237, 257–276, 281–303, and 315–337; these read SFYTGIGITLAIALVAGVLC, LDIMGQLVLAIMIGMIWGHTIGL, GLHAFLYAGLLLTVALVTVYSLA, SILTACGTAICGAAAIVAIAPLV, TAVSVAVIAVLGTMFTLIYTMMY, IAIVVKLTRVALLVPVAILIGIY, IPWFIFGFLAMSAVNTIGFL, VNLLISLAYLLLSMAMAGLGLNV, and VFFAGLLGTLILIGCGFGLIYVM.

The protein belongs to the UPF0324 family.

It is found in the cell membrane. This is UPF0324 membrane protein OB3406 from Oceanobacillus iheyensis (strain DSM 14371 / CIP 107618 / JCM 11309 / KCTC 3954 / HTE831).